We begin with the raw amino-acid sequence, 576 residues long: Arginine--tRNA ligase (576 aa).

Positions 122-132 (PNVAKEMHVGH) match the 'HIGH' region motif.

The protein belongs to the class-I aminoacyl-tRNA synthetase family. Monomer.

It localises to the cytoplasm. It catalyses the reaction tRNA(Arg) + L-arginine + ATP = L-arginyl-tRNA(Arg) + AMP + diphosphate. In Serratia proteamaculans (strain 568), this protein is Arginine--tRNA ligase.